We begin with the raw amino-acid sequence, 358 residues long: uncharacterized protein (358 aa).

Positions 324 to 358 are disordered; it reads DMEVEETPPTTNKDLPRGATQPKRNSIKRVSKLID. Over residues 348-358 the composition is skewed to basic residues; it reads NSIKRVSKLID.

This is an uncharacterized protein from Mycoplasma pneumoniae (strain ATCC 29342 / M129 / Subtype 1) (Mycoplasmoides pneumoniae).